The primary structure comprises 454 residues: UDP-N-acetylmuramoylalanine--D-glutamate ligase (454 aa).

Residue 114-120 (GTNGKTT) coordinates ATP.

This sequence belongs to the MurCDEF family.

The protein localises to the cytoplasm. The enzyme catalyses UDP-N-acetyl-alpha-D-muramoyl-L-alanine + D-glutamate + ATP = UDP-N-acetyl-alpha-D-muramoyl-L-alanyl-D-glutamate + ADP + phosphate + H(+). It functions in the pathway cell wall biogenesis; peptidoglycan biosynthesis. Cell wall formation. Catalyzes the addition of glutamate to the nucleotide precursor UDP-N-acetylmuramoyl-L-alanine (UMA). The polypeptide is UDP-N-acetylmuramoylalanine--D-glutamate ligase (Desulfitobacterium hafniense (strain DSM 10664 / DCB-2)).